We begin with the raw amino-acid sequence, 217 residues long: ATP phosphoribosyltransferase (217 aa).

This sequence belongs to the ATP phosphoribosyltransferase family. Short subfamily. In terms of assembly, heteromultimer composed of HisG and HisZ subunits.

It localises to the cytoplasm. It carries out the reaction 1-(5-phospho-beta-D-ribosyl)-ATP + diphosphate = 5-phospho-alpha-D-ribose 1-diphosphate + ATP. It functions in the pathway amino-acid biosynthesis; L-histidine biosynthesis; L-histidine from 5-phospho-alpha-D-ribose 1-diphosphate: step 1/9. Its function is as follows. Catalyzes the condensation of ATP and 5-phosphoribose 1-diphosphate to form N'-(5'-phosphoribosyl)-ATP (PR-ATP). Has a crucial role in the pathway because the rate of histidine biosynthesis seems to be controlled primarily by regulation of HisG enzymatic activity. The polypeptide is ATP phosphoribosyltransferase (Burkholderia orbicola (strain MC0-3)).